The following is a 632-amino-acid chain: 1-deoxy-D-xylulose-5-phosphate synthase (632 aa).

Residues His-78 and 119 to 121 (AHS) contribute to the thiamine diphosphate site. Asp-150 is a Mg(2+) binding site. Thiamine diphosphate contacts are provided by residues 151–152 (GA), Asn-179, Tyr-286, and Glu-368. A Mg(2+)-binding site is contributed by Asn-179.

Belongs to the transketolase family. DXPS subfamily. Homodimer. Requires Mg(2+) as cofactor. Thiamine diphosphate is required as a cofactor.

It catalyses the reaction D-glyceraldehyde 3-phosphate + pyruvate + H(+) = 1-deoxy-D-xylulose 5-phosphate + CO2. Its pathway is metabolic intermediate biosynthesis; 1-deoxy-D-xylulose 5-phosphate biosynthesis; 1-deoxy-D-xylulose 5-phosphate from D-glyceraldehyde 3-phosphate and pyruvate: step 1/1. In terms of biological role, catalyzes the acyloin condensation reaction between C atoms 2 and 3 of pyruvate and glyceraldehyde 3-phosphate to yield 1-deoxy-D-xylulose-5-phosphate (DXP). This chain is 1-deoxy-D-xylulose-5-phosphate synthase, found in Albidiferax ferrireducens (strain ATCC BAA-621 / DSM 15236 / T118) (Rhodoferax ferrireducens).